We begin with the raw amino-acid sequence, 74 residues long: SPbeta prophage-derived uncharacterized HTH-type transcriptional regulator YopS (74 aa).

In terms of domain architecture, HTH cro/C1-type spans 11 to 66; the sequence is IPELCRKKDITINELSEITGIKKQQLSDYNRLVKVDMSIRTAKRIAAALDCNVEDL. The segment at residues 22–41 is a DNA-binding region (H-T-H motif); sequence INELSEITGIKKQQLSDYNR.

In Bacillus subtilis (strain 168), this protein is SPbeta prophage-derived uncharacterized HTH-type transcriptional regulator YopS (yopS).